We begin with the raw amino-acid sequence, 220 residues long: Deoxyribose-phosphate aldolase (220 aa).

Residue aspartate 89 is the Proton donor/acceptor of the active site. Residue lysine 151 is the Schiff-base intermediate with acetaldehyde of the active site. The active-site Proton donor/acceptor is lysine 180.

Belongs to the DeoC/FbaB aldolase family. DeoC type 1 subfamily.

The protein resides in the cytoplasm. The enzyme catalyses 2-deoxy-D-ribose 5-phosphate = D-glyceraldehyde 3-phosphate + acetaldehyde. The protein operates within carbohydrate degradation; 2-deoxy-D-ribose 1-phosphate degradation; D-glyceraldehyde 3-phosphate and acetaldehyde from 2-deoxy-alpha-D-ribose 1-phosphate: step 2/2. In terms of biological role, catalyzes a reversible aldol reaction between acetaldehyde and D-glyceraldehyde 3-phosphate to generate 2-deoxy-D-ribose 5-phosphate. This chain is Deoxyribose-phosphate aldolase, found in Streptococcus uberis (strain ATCC BAA-854 / 0140J).